Consider the following 288-residue polypeptide: Alpha/beta hydrolase domain-containing protein 17B (288 aa).

Catalysis depends on charge relay system residues Ser170, Asp235, and His264.

Belongs to the AB hydrolase superfamily. ABHD17 family. Palmitoylated on cysteine residues located in a cysteine cluster at the N-terminus which promotes membrane localization.

The protein resides in the cell membrane. It is found in the recycling endosome membrane. It localises to the cell projection. The protein localises to the dendritic spine. Its subcellular location is the postsynaptic density membrane. It catalyses the reaction S-hexadecanoyl-L-cysteinyl-[protein] + H2O = L-cysteinyl-[protein] + hexadecanoate + H(+). Functionally, hydrolyzes fatty acids from S-acylated cysteine residues in proteins. Has depalmitoylating activity towards nras. In Xenopus laevis (African clawed frog), this protein is Alpha/beta hydrolase domain-containing protein 17B.